The following is a 102-amino-acid chain: MSKMGLFKKEKDNGVIDDLVPKKSDYVEKIAQEAIRKDKVDALVRKHEMEQFYHEVSQNEKIAELKAELAKKEKEIEELKEEIRGLKGKAGGLGIGGSQVTR.

This is an uncharacterized protein from Methanocaldococcus jannaschii (strain ATCC 43067 / DSM 2661 / JAL-1 / JCM 10045 / NBRC 100440) (Methanococcus jannaschii).